The chain runs to 60 residues: uncharacterized protein (60 aa).

A helical transmembrane segment spans residues 38–58 (SILAGGIIPVLFFFPLFLFLY).

It is found in the membrane. This is an uncharacterized protein from Saccharomyces cerevisiae (strain ATCC 204508 / S288c) (Baker's yeast).